A 360-amino-acid polypeptide reads, in one-letter code: Fructose import permease protein FrcC (360 aa).

Helical transmembrane passes span A48 to G68, A84 to V106, G125 to I145, L155 to Y175, A205 to L225, M254 to I274, A284 to F304, I310 to M330, and Q335 to I355.

It belongs to the binding-protein-dependent transport system permease family. In terms of assembly, the complex is composed of two ATP-binding proteins (FrcA), two transmembrane proteins (FrcC) and a solute-binding protein (FrcB).

It is found in the cell inner membrane. Its function is as follows. Part of the high-affinity ABC transporter complex FrcBCA involved in fructose uptake. Is also a high-affinity transporter for ribose and mannose. Responsible for the translocation of the substrate across the membrane. The chain is Fructose import permease protein FrcC from Rhizobium meliloti (Ensifer meliloti).